The sequence spans 131 residues: uncharacterized protein (131 aa).

Positions 1 to 16 are cleaved as a signal peptide; the sequence is MDVLFVAIFAVPLILG.

Its subcellular location is the secreted. This is an uncharacterized protein from Homo sapiens (Human).